The following is a 482-amino-acid chain: NAD(+) hydrolase ThsA (482 aa).

The 279-residue stretch at 3–281 (EHEQKIMIDR…EEITKRFRCK (279 aa)) folds into the Deacetylase sirtuin-type domain. NAD(+) contacts are provided by D112 and H150. The active-site Proton acceptor is H150. The segment at 282 to 482 (NVFLSGSAHE…SKIHDVIKLI (201 aa)) is SLOG (STALD) domain. Residues G287, S288, L324, F355, R373, K390, G407, and E411 each coordinate 3'cADPR.

This sequence belongs to the soluble Thoeris ThsA family. Homotetramer in solution.

The enzyme catalyses NAD(+) + H2O = ADP-D-ribose + nicotinamide + H(+). With respect to regulation, in vivo probably activated by a cyclic ADP-D-ribose generated by ThsB (might be 3'cADPR). Functionally, NAD(+) hydrolyzing component (NADase) of the Thoeris antiviral defense system, composed of ThsA and ThsB (maybe J591_1492). As purified, has NADase activity that is not activated by any tested cADPR isomers; binds 3'cADPR better than 2'cADPR. It was suggested the purified protein is already in a fully active state. Upon activation binds and hydrolyzes NAD(+), leading to cell death and inhibition of phage replication. This Acinetobacter baumannii (strain 532279) protein is NAD(+) hydrolase ThsA.